A 584-amino-acid polypeptide reads, in one-letter code: MGLSRKKIFTWPLLLTGMAVVSTTFSSCSVFNFFSNLPTTTDNNNYGPTVQNLSAFLPTSDYKKIYDLSFSLEFNNSGGYNPSRLMSNNEGVTAENVNRPYRVFGTGWLFDWQAQPVDENDQNAKWTGYFATNLHVAEALLNPLDNKNYRPAWYKNELPLPGVDQTLYFNLGKWDENLAVQNKHNPKSLTYLPLSNLPKTVYTATSFYKESPKWITPIEADNPGIREYIDFAVLSITLDLSWTMRNGEKVHRYNDEYQLYNRWIMPAMNVAKALWDNKGVLNQPATPPNKKEEDDQLTDQLPYHGFFDRSNYTNPNVSLNNFSVYLGGYPYYANWPTTPQYTKFSVPSLSRRQIPITSDSRGSPGWTINALNPTELDGQKIASSTSLSSTGGIRAGIYNADIARNFQLVYRNVKYKQYGYGYIIQNSNLSAGSSGSLALTSNNQALGIYFGTVSVDAKKEATFGLVASLFNPNKIQVNVVTGNNVFETDTIQPYDLIYGNDLMTDDYGSYIRSLQTLNLSSRLLTKIKDNLPKKEGSTNQANQQTNQTNRSTDATKKDSSSDETNKNPLAELLSDIFKNLPNWN.

Residues 1 to 27 form the signal peptide; that stretch reads MGLSRKKIFTWPLLLTGMAVVSTTFSS. Residue Cys28 is the site of N-palmitoyl cysteine attachment. The S-diacylglycerol cysteine moiety is linked to residue Cys28. The tract at residues 530 to 570 is disordered; sequence NLPKKEGSTNQANQQTNQTNRSTDATKKDSSSDETNKNPLA. A compositionally biased stretch (low complexity) spans 538 to 552; that stretch reads TNQANQQTNQTNRST. Residues 553–565 show a composition bias toward basic and acidic residues; it reads DATKKDSSSDETN.

Belongs to the MG067/MG068/MG395 family.

It localises to the cell membrane. This is an uncharacterized protein from Mycoplasmoides gallisepticum (strain R(low / passage 15 / clone 2)) (Mycoplasma gallisepticum).